The chain runs to 347 residues: FK506-binding protein-like (347 aa).

Residues 1 to 24 (METSPISPMNEKNTAQPQQREENA) form a disordered region. The residue at position 3 (Thr3) is a Phosphothreonine. 3 TPR repeats span residues 208 to 241 (AKEE…LLTL), 250 to 283 (TTLY…EPGH), and 284 to 317 (LKAL…DPKN).

Forms a ternary complex with CDKN1A/p21 and HSP90AB1/Hsp90.

May be involved in response to X-ray. Regulates p21 protein stability by binding to Hsp90 and p21. The sequence is that of FK506-binding protein-like (Fkbpl) from Mus musculus (Mouse).